Consider the following 648-residue polypeptide: Beta-glucuronidase (648 aa).

The first 22 residues, 1 to 22, serve as a signal peptide directing secretion; the sequence is MSPRRSVCWFVLGQLLCSCAVA. N-linked (GlcNAc...) asparagine glycans are attached at residues asparagine 172 and asparagine 416. Residue glutamate 447 is the Proton donor of the active site. The N-linked (GlcNAc...) asparagine glycan is linked to asparagine 627.

The protein belongs to the glycosyl hydrolase 2 family. Homotetramer. In terms of processing, undergoes a post-transcriptional proteolytic cleavage near its C-terminal end, which reduces its size by approximately 3 kDa. The site of this cleavage has as yet not been determined.

It is found in the lysosome. The enzyme catalyses a beta-D-glucuronoside + H2O = D-glucuronate + an alcohol. Inhibited by L-aspartic acid. Its function is as follows. Plays an important role in the degradation of dermatan and keratan sulfates. This Rattus norvegicus (Rat) protein is Beta-glucuronidase (Gusb).